Consider the following 731-residue polypeptide: Catalase-peroxidase (731 aa).

The disordered stretch occupies residues 1–23 (MSDLKCPFSGHTGAVTPAGNTNN). Positions 95–218 (WHSAGTYRTG…LAAVEMGLIY (124 aa)) form a cross-link, tryptophyl-tyrosyl-methioninium (Trp-Tyr) (with M-244). Histidine 96 (proton acceptor) is an active-site residue. Positions 218–244 (YVNPEGPHGEPDPVASGRDVRETFARM) form a cross-link, tryptophyl-tyrosyl-methioninium (Tyr-Met) (with W-95). Heme b is bound at residue histidine 259.

It belongs to the peroxidase family. Peroxidase/catalase subfamily. As to quaternary structure, homodimer or homotetramer. The cofactor is heme b. Formation of the three residue Trp-Tyr-Met cross-link is important for the catalase, but not the peroxidase activity of the enzyme.

It carries out the reaction H2O2 + AH2 = A + 2 H2O. It catalyses the reaction 2 H2O2 = O2 + 2 H2O. Bifunctional enzyme with both catalase and broad-spectrum peroxidase activity. This is Catalase-peroxidase from Synechococcus sp. (strain WH7803).